We begin with the raw amino-acid sequence, 814 residues long: Flagellar radial spoke protein 1 (814 aa).

An Asymmetric dimethylarginine modification is found at R243. The interval 283 to 346 (VQSISTGNRE…PPPPAPKVDP (64 aa)) is disordered. Acidic residues predominate over residues 303 to 329 (PEEDEEEEKEEEKEEPEEGEEGEEGEG). Residue R428 is modified to Asymmetric dimethylarginine. MORN repeat units follow at residues 577–597 (YFGSYADDVKHGPGLYAFATG), 600–622 (YAGEYAGGKRHGRGVMVFPDGGT), 623–645 (YVGEFVADKFEGQGQYRYPDGSV), 646–662 (YTGSWAAGQKHGPGVYW), 671–685 (GEWKKGLLVGKGTYE), and 691–707 (FEGEFVRGMPAGTATYT). Residues 739-769 (GIPPGSGDEPQLDEEGQPIEDTDKPPLPAHP) form a disordered region. Over residues 748 to 758 (PQLDEEGQPIE) the composition is skewed to acidic residues.

Post-translationally, asymmetrically dimethylated at Arg-243 and Arg-428 during flagellum resorption. Probably methylated by PRMT1.

The protein localises to the cytoplasm. It localises to the cytoskeleton. The protein resides in the flagellum axoneme. In terms of biological role, flagellar radial spokes contribute to the regulation of dynein arm activity and thus the pattern of flagellar bending. They consist of a thin stalk, which is attached to the a subfiber of the outer doublet microtubule, and a bulbous head, which is attached to the stalk and appears to interact with the projections from the central pair of microtubules. This Chlamydomonas reinhardtii (Chlamydomonas smithii) protein is Flagellar radial spoke protein 1.